A 229-amino-acid polypeptide reads, in one-letter code: 3,4-dihydroxy-2-butanone 4-phosphate synthase (229 aa).

D-ribulose 5-phosphate contacts are provided by residues 28 to 29 (RE), aspartate 33, 164 to 168 (RGGHT), and glutamate 188. Glutamate 29 contributes to the Mg(2+) binding site. Mg(2+) is bound at residue histidine 167.

Belongs to the DHBP synthase family. In terms of assembly, homodimer. It depends on Mg(2+) as a cofactor. The cofactor is Mn(2+).

The catalysed reaction is D-ribulose 5-phosphate = (2S)-2-hydroxy-3-oxobutyl phosphate + formate + H(+). The protein operates within cofactor biosynthesis; riboflavin biosynthesis; 2-hydroxy-3-oxobutyl phosphate from D-ribulose 5-phosphate: step 1/1. Its function is as follows. Catalyzes the conversion of D-ribulose 5-phosphate to formate and 3,4-dihydroxy-2-butanone 4-phosphate. The sequence is that of 3,4-dihydroxy-2-butanone 4-phosphate synthase from Methanothermobacter thermautotrophicus (strain ATCC 29096 / DSM 1053 / JCM 10044 / NBRC 100330 / Delta H) (Methanobacterium thermoautotrophicum).